The chain runs to 353 residues: DNA-directed RNA polymerase subunit alpha (353 aa).

The interval 1 to 234 (MVREKVTVST…DLFIPFLHTE (234 aa)) is alpha N-terminal domain (alpha-NTD). Residues 267-353 (KRALKSIFID…LAQLIDSKSG (87 aa)) are alpha C-terminal domain (alpha-CTD).

This sequence belongs to the RNA polymerase alpha chain family. As to quaternary structure, in plastids the minimal PEP RNA polymerase catalytic core is composed of four subunits: alpha, beta, beta', and beta''. When a (nuclear-encoded) sigma factor is associated with the core the holoenzyme is formed, which can initiate transcription.

The protein localises to the plastid. It localises to the chloroplast. The catalysed reaction is RNA(n) + a ribonucleoside 5'-triphosphate = RNA(n+1) + diphosphate. DNA-dependent RNA polymerase catalyzes the transcription of DNA into RNA using the four ribonucleoside triphosphates as substrates. This is DNA-directed RNA polymerase subunit alpha from Daucus carota (Wild carrot).